We begin with the raw amino-acid sequence, 754 residues long: MIETIQADWIKSEAINLENCCNDNPLKILGPHFYEEQWVIRVWMPEADEVKINFKNNTYKAESINHKWLFEAILPENPNFNYEINISRGGITHTQHDPWSYREEWMGEVDRHLFAEGNHHHIWEKMGAHLIEEKNQKGVMFCIWAPNAKSISIIGDINSWDGRHHPMQKRLGGIWELFMPTMKEGDTYKYEIRTQQGHIYEKADPYGFLHEIRPQNGSIVSKLKNFNWNDSSWISNRDSSSQINKPISVYEMHLGSWLHESTDNKYLEDNGEPRDPVPAADLKPGTRLLTYPELTEKLIPYVKDRGFTHIELMPISEHPFDGSWGYQVTGWYAPTSRFGTPNEFREFVNKCHEEGIGVILDWVPGHFPKDKHGLAFFDGCHLYEHGDSRIGEHKEWGTLIFNYSRNEVRNFLVANLIYWFEEFHIDGIRVDAVASMLYRDYLRPDGEWIPNENGGNENIEAVKFLQQANHVLFQHFPGALSIAEESTTWPMVTKPTDMGGLGFNLKWNMGWMHDMLDYFEIDPWFRQFHQNSVTFSITYNYTENFMLALSHDEVVHGKSHLLHKMPGDDWKKYANTRALLTYMWTHPGKKTIFMGMEFGQRQEWNVWDDLQWELLEFEPHKGIRNLIDDLNALYKNEAALWKNDFDPYGFQWIDCNDKSNSVISFMRRENDTNEWLVVVANFTPNTHGSYKVGVPVEGFYKEIFNSDGSRYGGSNKGNMGGKETINYNIHDYQNALELALPPLSVSIFKHLSKK.

Asp-431 functions as the Nucleophile in the catalytic mechanism. The Proton donor role is filled by Glu-484.

Belongs to the glycosyl hydrolase 13 family. GlgB subfamily. Monomer.

It catalyses the reaction Transfers a segment of a (1-&gt;4)-alpha-D-glucan chain to a primary hydroxy group in a similar glucan chain.. The protein operates within glycan biosynthesis; glycogen biosynthesis. Functionally, catalyzes the formation of the alpha-1,6-glucosidic linkages in glycogen by scission of a 1,4-alpha-linked oligosaccharide from growing alpha-1,4-glucan chains and the subsequent attachment of the oligosaccharide to the alpha-1,6 position. In Prochlorococcus marinus (strain MIT 9215), this protein is 1,4-alpha-glucan branching enzyme GlgB.